The following is a 416-amino-acid chain: Kynureninase (416 aa).

Pyridoxal 5'-phosphate contacts are provided by residues Thr97, Ser98, 129 to 132 (FPTD), Thr172, Asp201, His204, and Tyr226. The residue at position 227 (Lys227) is an N6-(pyridoxal phosphate)lysine. Residues Trp256 and Thr282 each coordinate pyridoxal 5'-phosphate.

The protein belongs to the kynureninase family. Homodimer. Pyridoxal 5'-phosphate is required as a cofactor.

The enzyme catalyses L-kynurenine + H2O = anthranilate + L-alanine + H(+). It carries out the reaction 3-hydroxy-L-kynurenine + H2O = 3-hydroxyanthranilate + L-alanine + H(+). It participates in amino-acid degradation; L-kynurenine degradation; L-alanine and anthranilate from L-kynurenine: step 1/1. The protein operates within cofactor biosynthesis; NAD(+) biosynthesis; quinolinate from L-kynurenine: step 2/3. In terms of biological role, catalyzes the cleavage of L-kynurenine (L-Kyn) and L-3-hydroxykynurenine (L-3OHKyn) into anthranilic acid (AA) and 3-hydroxyanthranilic acid (3-OHAA), respectively. In Pseudomonas fluorescens, this protein is Kynureninase.